Consider the following 135-residue polypeptide: Probable histone H2A.7 (135 aa).

This sequence belongs to the histone H2A family. As to quaternary structure, the nucleosome is a histone octamer containing two molecules each of H2A, H2B, H3 and H4 assembled in one H3-H4 heterotetramer and two H2A-H2B heterodimers. The octamer wraps approximately 147 bp of DNA.

Its subcellular location is the nucleus. It localises to the chromosome. Functionally, core component of nucleosome. Nucleosomes wrap and compact DNA into chromatin, limiting DNA accessibility to the cellular machineries which require DNA as a template. Histones thereby play a central role in transcription regulation, DNA repair, DNA replication and chromosomal stability. DNA accessibility is regulated via a complex set of post-translational modifications of histones, also called histone code, and nucleosome remodeling. The sequence is that of Probable histone H2A.7 from Oryza sativa subsp. indica (Rice).